Here is a 312-residue protein sequence, read N- to C-terminus: Beta-ketoacyl-[acyl-carrier-protein] synthase III (312 aa).

Active-site residues include Cys-112 and His-237. Positions 238-242 (QANIR) are ACP-binding. The active site involves Asn-267.

This sequence belongs to the thiolase-like superfamily. FabH family. In terms of assembly, homodimer.

The protein localises to the cytoplasm. The enzyme catalyses malonyl-[ACP] + acetyl-CoA + H(+) = 3-oxobutanoyl-[ACP] + CO2 + CoA. The protein operates within lipid metabolism; fatty acid biosynthesis. Its function is as follows. Catalyzes the condensation reaction of fatty acid synthesis by the addition to an acyl acceptor of two carbons from malonyl-ACP. Catalyzes the first condensation reaction which initiates fatty acid synthesis and may therefore play a role in governing the total rate of fatty acid production. Possesses both acetoacetyl-ACP synthase and acetyl transacylase activities. Its substrate specificity determines the biosynthesis of branched-chain and/or straight-chain of fatty acids. The polypeptide is Beta-ketoacyl-[acyl-carrier-protein] synthase III (Listeria welshimeri serovar 6b (strain ATCC 35897 / DSM 20650 / CCUG 15529 / CIP 8149 / NCTC 11857 / SLCC 5334 / V8)).